The primary structure comprises 104 residues: NADH-quinone oxidoreductase subunit K (104 aa).

3 consecutive transmembrane segments (helical) span residues 4-24, 31-51, and 67-87; these read VPAS…LFGA, VIVL…LVAF, and LFTM…LIAL.

The protein belongs to the complex I subunit 4L family. As to quaternary structure, NDH-1 is composed of 14 different subunits. Subunits NuoA, H, J, K, L, M, N constitute the membrane sector of the complex.

The protein localises to the cell membrane. The catalysed reaction is a quinone + NADH + 5 H(+)(in) = a quinol + NAD(+) + 4 H(+)(out). NDH-1 shuttles electrons from NADH, via FMN and iron-sulfur (Fe-S) centers, to quinones in the respiratory chain. The immediate electron acceptor for the enzyme in this species is believed to be a menaquinone. Couples the redox reaction to proton translocation (for every two electrons transferred, four hydrogen ions are translocated across the cytoplasmic membrane), and thus conserves the redox energy in a proton gradient. In Bacillus cereus (strain Q1), this protein is NADH-quinone oxidoreductase subunit K.